A 237-amino-acid polypeptide reads, in one-letter code: Ribonuclease PH (237 aa).

Phosphate contacts are provided by residues R86 and 124–126; that span reads GTR.

The protein belongs to the RNase PH family. In terms of assembly, homohexameric ring arranged as a trimer of dimers.

It catalyses the reaction tRNA(n+1) + phosphate = tRNA(n) + a ribonucleoside 5'-diphosphate. Its function is as follows. Phosphorolytic 3'-5' exoribonuclease that plays an important role in tRNA 3'-end maturation. Removes nucleotide residues following the 3'-CCA terminus of tRNAs; can also add nucleotides to the ends of RNA molecules by using nucleoside diphosphates as substrates, but this may not be physiologically important. Probably plays a role in initiation of 16S rRNA degradation (leading to ribosome degradation) during starvation. The sequence is that of Ribonuclease PH from Shewanella baltica (strain OS223).